A 358-amino-acid chain; its full sequence is C-X-C chemokine receptor type 4-A (358 aa).

Residues 1–25 (MDGFSGGIDINIFDGNSTENGSGDF) are important for chemokine binding and signaling. Residues 1-44 (MDGFSGGIDINIFDGNSTENGSGDFEDFIEPCFMHENSDFNRIF) lie on the Extracellular side of the membrane. Asn16 and Asn20 each carry an N-linked (GlcNAc...) asparagine glycan. Cystine bridges form between Cys32–Cys281 and Cys113–Cys190. Residues 45-67 (LPTIYSFIFLLGIIGNGLVVVVM) form a helical membrane-spanning segment. At 68–81 (GYQKKSRTMTDKYR) the chain is on the cytoplasmic side. The helical transmembrane segment at 82–103 (LHLSVADLLFVFTLPFWSVDAA) threads the bilayer. The segment at 98–101 (WSVD) is chemokine binding. Over 104-114 (IGWYFKEFLCK) the chain is Extracellular. Residues 115-134 (AVHVIYTVNLYSSVLILAFI) traverse the membrane as a helical segment. A chemokine binding region spans residues 117–121 (HVIYT). Topologically, residues 135-158 (SLDRYLAIVHATNSQGSRKMLADK) are cytoplasmic. The segment at 139–151 (YLAIVHATNSQGS) is involved in dimerization; when bound to chemokine. A helical membrane pass occupies residues 159–178 (VVYAGVWLPALLLTVPDLVF). Over 179–202 (ARVSDENGQFVCDRIYPIENRETW) the chain is Extracellular. Residues 190-194 (CDRIY) form a chemokine binding, important for signaling region. The chain crosses the membrane as a helical span at residues 203-223 (TVGFRFLHITVGLILPGLIIL). Residues 224 to 248 (ICYCVIISKLSHSKGHQKRKALKTT) lie on the Cytoplasmic side of the membrane. Residues 249–268 (VILILAFFACWLPYYVCLTT) traverse the membrane as a helical segment. Topologically, residues 269 to 289 (DTFMLLGLVKGDCIWENTLHM) are extracellular. Residues 290–309 (AISITEALAFFHCCLNPILY) traverse the membrane as a helical segment. The Cytoplasmic portion of the chain corresponds to 310–358 (AFLGAKFKTSAQNAFTSVSRGSSLKILSKKRAGLSSVSTESESSSFHSS). A disordered region spans residues 338–358 (KKRAGLSSVSTESESSSFHSS). Residues 344–358 (SSVSTESESSSFHSS) are compositionally biased toward low complexity.

The protein belongs to the G-protein coupled receptor 1 family. Monomer. Can form dimers. Sulfation is required for efficient binding of cxcl12/sdf-1alpha and promotes its dimerization. Post-translationally, O- and N-glycosylated. In terms of tissue distribution, highly expressed in the embryonic nervous system including forebrain, hindbrain and sensory organs (including eye), and in neural crest cells. Also expressed in the dorsal lateral plate, the first site of definitive hematopoiesis in the embryo. Appears in migrating presumptive primordial germ cells (pPGCs) from stage 24. Expressed in the epidermis at stage 40. In the adult, highly expressed in the spleen with lower levels of expression in the liver and very low levels in kidney, heart, skin and brain.

The protein resides in the cell membrane. Its subcellular location is the cytoplasm. It localises to the nucleus. The protein localises to the early endosome. It is found in the late endosome. The protein resides in the lysosome. In terms of biological role, receptor for the C-X-C chemokine cxcl12/sdf-1. Transduces a signal by increasing the intracellular level of calcium ions. Signaling with cxcl12/sdf-1 mediates the directional movement of mesodermal cells during gastrulation. May play a role in the migration of embryonic presumptive primordial germ cells (pPGCs). May also be involved in regulating the migration of hematopoietic stem cells into the larval liver. The chain is C-X-C chemokine receptor type 4-A (cxcr4-a) from Xenopus laevis (African clawed frog).